The sequence spans 1334 residues: DNA-directed RNA polymerase subunit beta' (1334 aa).

C213, C284, C291, and C294 together coordinate Zn(2+). Positions 1299–1308 (SSRGSSRFSR) are enriched in low complexity. The interval 1299–1334 (SSRGSSRFSRQPISDRWSEADEEGEEDDFEEDYEEE) is disordered. The span at 1318-1334 (ADEEGEEDDFEEDYEEE) shows a compositional bias: acidic residues.

It belongs to the RNA polymerase beta' chain family. RpoC2 subfamily. In terms of assembly, in cyanobacteria the RNAP catalytic core is composed of 2 alpha, 1 beta, 1 beta', 1 gamma and 1 omega subunit. When a sigma factor is associated with the core the holoenzyme is formed, which can initiate transcription. The cofactor is Zn(2+).

It catalyses the reaction RNA(n) + a ribonucleoside 5'-triphosphate = RNA(n+1) + diphosphate. In terms of biological role, DNA-dependent RNA polymerase catalyzes the transcription of DNA into RNA using the four ribonucleoside triphosphates as substrates. The polypeptide is DNA-directed RNA polymerase subunit beta' (Microcystis aeruginosa (strain NIES-843 / IAM M-2473)).